A 67-amino-acid chain; its full sequence is uncharacterized protein (67 aa).

The next 2 membrane-spanning stretches (helical) occupy residues 10 to 32 (NLSHVLALFLVSFILMAPYTAFI) and 44 to 66 (ATLTGIVAGILSNPGLFAYMGQW).

It is found in the cell membrane. This is an uncharacterized protein from Archaeoglobus fulgidus (strain ATCC 49558 / DSM 4304 / JCM 9628 / NBRC 100126 / VC-16).